A 375-amino-acid polypeptide reads, in one-letter code: tRNA-specific 2-thiouridylase MnmA (375 aa).

Residues 13-20 (AMSGGVDS) and M39 each bind ATP. The active-site Nucleophile is the C111. The cysteines at positions 111 and 208 are disulfide-linked. Residue G135 coordinates ATP. Positions 158 to 160 (KDQ) are interaction with tRNA. C208 functions as the Cysteine persulfide intermediate in the catalytic mechanism. An interaction with tRNA region spans residues 313 to 314 (RY).

Belongs to the MnmA/TRMU family.

The protein resides in the cytoplasm. The catalysed reaction is S-sulfanyl-L-cysteinyl-[protein] + uridine(34) in tRNA + AH2 + ATP = 2-thiouridine(34) in tRNA + L-cysteinyl-[protein] + A + AMP + diphosphate + H(+). Catalyzes the 2-thiolation of uridine at the wobble position (U34) of tRNA, leading to the formation of s(2)U34. This Geotalea uraniireducens (strain Rf4) (Geobacter uraniireducens) protein is tRNA-specific 2-thiouridylase MnmA.